We begin with the raw amino-acid sequence, 511 residues long: Maturase K (511 aa).

The protein belongs to the intron maturase 2 family. MatK subfamily.

It is found in the plastid. The protein resides in the chloroplast. In terms of biological role, usually encoded in the trnK tRNA gene intron. Probably assists in splicing its own and other chloroplast group II introns. This chain is Maturase K, found in Oryza nivara (Indian wild rice).